The chain runs to 150 residues: 1,4-dihydroxy-2-naphthoyl-CoA hydrolase (150 aa).

Aspartate 19 is an active-site residue.

Belongs to the 4-hydroxybenzoyl-CoA thioesterase family. DHNA-CoA hydrolase subfamily.

It catalyses the reaction 1,4-dihydroxy-2-naphthoyl-CoA + H2O = 1,4-dihydroxy-2-naphthoate + CoA + H(+). The protein operates within cofactor biosynthesis; phylloquinone biosynthesis. It participates in quinol/quinone metabolism; 1,4-dihydroxy-2-naphthoate biosynthesis; 1,4-dihydroxy-2-naphthoate from chorismate: step 7/7. Catalyzes the hydrolysis of 1,4-dihydroxy-2-naphthoyl-CoA (DHNA-CoA) to 1,4-dihydroxy-2-naphthoate (DHNA), a reaction involved in phylloquinone (vitamin K1) biosynthesis. The protein is 1,4-dihydroxy-2-naphthoyl-CoA hydrolase of Prochlorococcus marinus (strain MIT 9312).